The sequence spans 429 residues: Nucleotide exchange factor Sil1 (429 aa).

Positions 1–24 (MSGKQVVILLGSVLILGCLQVAAA) are cleaved as a signal peptide. A glycan (N-linked (GlcNAc...) asparagine) is linked at Asn29. The tract at residues 70 to 98 (DESERGTSLQSQPDDQNARESHDDNEPLA) is disordered. Over residues 75–84 (GTSLQSQPDD) the composition is skewed to polar residues. Basic and acidic residues predominate over residues 85 to 94 (QNARESHDDN). The stretch at 104–135 (DIIEESIRRVKEQKKSYAELRKAYKEFQKNFR) forms a coiled coil. N-linked (GlcNAc...) asparagine glycosylation is found at Asn150, Asn199, and Asn400. Positions 426–429 (HTEL) match the Prevents secretion from ER motif.

Belongs to the SIL1 family.

Its subcellular location is the endoplasmic reticulum lumen. Its function is as follows. Required for protein translocation and folding in the endoplasmic reticulum (ER). Functions as a nucleotide exchange factor for an ER lumenal chaperone of HSP70 family. This is Nucleotide exchange factor Sil1 from Drosophila melanogaster (Fruit fly).